The chain runs to 144 residues: 3-dehydroquinate dehydratase (144 aa).

Tyr-23 (proton acceptor) is an active-site residue. Substrate-binding residues include Asn-74, His-80, and Asp-87. The Proton donor role is filled by His-101. Substrate-binding positions include Leu-102–Ser-103 and Arg-112.

It belongs to the type-II 3-dehydroquinase family. Homododecamer.

The enzyme catalyses 3-dehydroquinate = 3-dehydroshikimate + H2O. The protein operates within metabolic intermediate biosynthesis; chorismate biosynthesis; chorismate from D-erythrose 4-phosphate and phosphoenolpyruvate: step 3/7. Functionally, catalyzes a trans-dehydration via an enolate intermediate. The protein is 3-dehydroquinate dehydratase of Mesorhizobium japonicum (strain LMG 29417 / CECT 9101 / MAFF 303099) (Mesorhizobium loti (strain MAFF 303099)).